Reading from the N-terminus, the 266-residue chain is Glucosamine-6-phosphate deaminase (266 aa).

The Proton acceptor; for enolization step role is filled by Asp-72. Asp-141 serves as the catalytic For ring-opening step. His-143 serves as the catalytic Proton acceptor; for ring-opening step. Glu-148 functions as the For ring-opening step in the catalytic mechanism.

Belongs to the glucosamine/galactosamine-6-phosphate isomerase family. NagB subfamily. In terms of assembly, homohexamer.

The enzyme catalyses alpha-D-glucosamine 6-phosphate + H2O = beta-D-fructose 6-phosphate + NH4(+). Its pathway is amino-sugar metabolism; N-acetylneuraminate degradation; D-fructose 6-phosphate from N-acetylneuraminate: step 5/5. Its activity is regulated as follows. Allosterically activated by N-acetylglucosamine 6-phosphate (GlcNAc6P). Functionally, catalyzes the reversible isomerization-deamination of glucosamine 6-phosphate (GlcN6P) to form fructose 6-phosphate (Fru6P) and ammonium ion. This is Glucosamine-6-phosphate deaminase from Aliivibrio fischeri (strain ATCC 700601 / ES114) (Vibrio fischeri).